We begin with the raw amino-acid sequence, 368 residues long: Agmatine deiminase (368 aa).

Cys357 serves as the catalytic Amidino-cysteine intermediate.

The protein belongs to the agmatine deiminase family. As to quaternary structure, homodimer.

The enzyme catalyses agmatine + H2O = N-carbamoylputrescine + NH4(+). Its pathway is amine and polyamine biosynthesis; putrescine biosynthesis via agmatine pathway; N-carbamoylputrescine from agmatine: step 1/1. Mediates the hydrolysis of agmatine into N-carbamoylputrescine in the arginine decarboxylase (ADC) pathway of putrescine biosynthesis, a basic polyamine. In Pseudomonas fluorescens (strain ATCC BAA-477 / NRRL B-23932 / Pf-5), this protein is Agmatine deiminase.